Consider the following 139-residue polypeptide: Nucleoside diphosphate kinase (139 aa).

The ATP site is built by Lys-11, Phe-59, Arg-87, Thr-93, Arg-104, and Asn-114. His-117 serves as the catalytic Pros-phosphohistidine intermediate.

Belongs to the NDK family. Homotetramer. It depends on Mg(2+) as a cofactor.

It is found in the cytoplasm. The catalysed reaction is a 2'-deoxyribonucleoside 5'-diphosphate + ATP = a 2'-deoxyribonucleoside 5'-triphosphate + ADP. It carries out the reaction a ribonucleoside 5'-diphosphate + ATP = a ribonucleoside 5'-triphosphate + ADP. Functionally, major role in the synthesis of nucleoside triphosphates other than ATP. The ATP gamma phosphate is transferred to the NDP beta phosphate via a ping-pong mechanism, using a phosphorylated active-site intermediate. This is Nucleoside diphosphate kinase from Flavobacterium johnsoniae (strain ATCC 17061 / DSM 2064 / JCM 8514 / BCRC 14874 / CCUG 350202 / NBRC 14942 / NCIMB 11054 / UW101) (Cytophaga johnsonae).